Here is a 227-residue protein sequence, read N- to C-terminus: PKHD-type hydroxylase Bcep18194_B0892 (227 aa).

In terms of domain architecture, Fe2OG dioxygenase spans 78–178; the sequence is KVFPPLFNRY…RVASFFWIQS (101 aa). 3 residues coordinate Fe cation: H96, D98, and H159. R169 serves as a coordination point for 2-oxoglutarate.

Requires Fe(2+) as cofactor. It depends on L-ascorbate as a cofactor.

The polypeptide is PKHD-type hydroxylase Bcep18194_B0892 (Burkholderia lata (strain ATCC 17760 / DSM 23089 / LMG 22485 / NCIMB 9086 / R18194 / 383)).